Here is a 215-residue protein sequence, read N- to C-terminus: Adenylate kinase (215 aa).

An ATP-binding site is contributed by 10 to 15 (GAGKGT). Residues 30-59 (STGDIFRANISGKTELGMKAKGYMDKGLLV) form an NMP region. Residues threonine 31, arginine 36, 57–59 (LLV), 85–88 (GFPR), and glutamine 92 each bind AMP. The tract at residues 126–163 (GRRVCSKCGASYHIEYNPTKVEGICDLCGSPVVQRKDD) is LID. Arginine 127 lines the ATP pocket. Zn(2+)-binding residues include cysteine 130 and cysteine 133. 136-137 (SY) serves as a coordination point for ATP. The Zn(2+) site is built by cysteine 150 and cysteine 153. AMP is bound by residues arginine 160 and arginine 171. Residue glutamine 199 coordinates ATP.

Belongs to the adenylate kinase family. In terms of assembly, monomer.

The protein resides in the cytoplasm. It carries out the reaction AMP + ATP = 2 ADP. Its pathway is purine metabolism; AMP biosynthesis via salvage pathway; AMP from ADP: step 1/1. Catalyzes the reversible transfer of the terminal phosphate group between ATP and AMP. Plays an important role in cellular energy homeostasis and in adenine nucleotide metabolism. The sequence is that of Adenylate kinase from Clostridium acetobutylicum (strain ATCC 824 / DSM 792 / JCM 1419 / IAM 19013 / LMG 5710 / NBRC 13948 / NRRL B-527 / VKM B-1787 / 2291 / W).